The sequence spans 232 residues: Large ribosomal subunit protein uL1 (232 aa).

This sequence belongs to the universal ribosomal protein uL1 family. Part of the 50S ribosomal subunit.

Binds directly to 23S rRNA. The L1 stalk is quite mobile in the ribosome, and is involved in E site tRNA release. In terms of biological role, protein L1 is also a translational repressor protein, it controls the translation of the L11 operon by binding to its mRNA. This Lysinibacillus sphaericus (strain C3-41) protein is Large ribosomal subunit protein uL1.